The following is an 853-amino-acid chain: ATP-dependent zinc metalloprotease FtsH (853 aa).

Residues 1-5 lie on the Cytoplasmic side of the membrane; that stretch reads MKNKK. Residues 6–26 form a helical membrane-spanning segment; sequence YLQFGGIAAVILIVLFLVSLF. At 27–113 the chain is on the extracellular side; sequence SSDTRNFQEV…SYTTNVTQES (87 aa). Residues 114–134 traverse the membrane as a helical segment; it reads FLMSMLSFILPMVIIFGLLMF. Over 135–853 the chain is Cytoplasmic; the sequence is FLTRMQGGGM…NPENEGDNRG (719 aa). 205-212 serves as a coordination point for ATP; it reads GPPGTGKT. His-427 provides a ligand contact to Zn(2+). The active site involves Glu-428. Zn(2+) contacts are provided by His-431 and Asp-503. 2 stretches are compositionally biased toward basic and acidic residues: residues 619-632 and 639-648; these read ESTR…REPV and ALERGEEPPK. The tract at residues 619-853 is disordered; the sequence is ESTRFPRQEN…NPENEGDNRG (235 aa). The span at 677–695 shows a compositional bias: low complexity; the sequence is PASSAGVAPAAGAAAGSYG. 2 stretches are compositionally biased toward polar residues: residues 728-739 and 770-788; these read TPAQAPEQSPDS and MDQS…QESP. A compositionally biased stretch (basic and acidic residues) spans 796–813; that stretch reads LPDHERSDYPEKAQKESV.

It in the central section; belongs to the AAA ATPase family. This sequence in the C-terminal section; belongs to the peptidase M41 family. In terms of assembly, homohexamer. The cofactor is Zn(2+).

It localises to the cell membrane. Its function is as follows. Acts as a processive, ATP-dependent zinc metallopeptidase for both cytoplasmic and membrane proteins. Plays a role in the quality control of integral membrane proteins. This is ATP-dependent zinc metalloprotease FtsH from Corynebacterium glutamicum (strain ATCC 13032 / DSM 20300 / JCM 1318 / BCRC 11384 / CCUG 27702 / LMG 3730 / NBRC 12168 / NCIMB 10025 / NRRL B-2784 / 534).